Reading from the N-terminus, the 842-residue chain is Glycogen phosphorylase, muscle form (842 aa).

Residue Ser-2 is modified to N-acetylserine. The residue at position 15 (Ser-15) is a Phosphoserine; by PHK; in form phosphorylase A. Ser-26 carries the phosphoserine modification. Asp-43 and Tyr-76 together coordinate AMP. A phosphotyrosine mark is found at Tyr-204 and Tyr-227. Residue 310–319 coordinates AMP; that stretch reads RRFKSSKFGC. Ser-430 carries the phosphoserine modification. Tyr-473 carries the phosphotyrosine modification. Residue Ser-514 is modified to Phosphoserine. Lys-681 is modified (N6-(pyridoxal phosphate)lysine). Phosphoserine occurs at positions 747 and 748.

It belongs to the glycogen phosphorylase family. In terms of assembly, homodimer. Homotetramer; to form the enzymatically active phosphorylase A. Pyridoxal 5'-phosphate serves as cofactor. In terms of processing, phosphorylation of Ser-15 converts phosphorylase B (unphosphorylated) to phosphorylase A.

It carries out the reaction [(1-&gt;4)-alpha-D-glucosyl](n) + phosphate = [(1-&gt;4)-alpha-D-glucosyl](n-1) + alpha-D-glucose 1-phosphate. Allosterically regulated through the non-covalent binding of metabolites, being activated by AMP and inhibited by ATP, ADP, and glucose-6-phosphate. The activity is also controlled by post-translational modifications including phosphorylation. In terms of biological role, allosteric enzyme that catalyzes the rate-limiting step in glycogen catabolism, the phosphorolytic cleavage of glycogen to produce glucose-1-phosphate, and plays a central role in maintaining cellular and organismal glucose homeostasis. The chain is Glycogen phosphorylase, muscle form from Rattus norvegicus (Rat).